The sequence spans 494 residues: UPF0371 protein SPCG_0344 (494 aa).

Belongs to the UPF0371 family.

In Streptococcus pneumoniae (strain CGSP14), this protein is UPF0371 protein SPCG_0344.